The sequence spans 484 residues: Probable sphingolipid transporter spinster homolog 2 (484 aa).

Residues 1–23 (MDVDGEGDRGQNPRIMERDSDSI) are disordered. Residues 38–58 (LLFVFCVVNLINYIDRGAIAS) form a helical membrane-spanning segment. N-linked (GlcNAc...) asparagine glycosylation is found at Asn-62 and Asn-85. Helical transmembrane passes span 93–113 (VLSS…ASLA), 122–142 (IGVG…SFDF), 147–167 (ICRM…APFI), 181–201 (AVFY…GGVV), 209–229 (AAFW…FVIK), 273–293 (VYVT…AYSY), 311–331 (IFGG…GVIL), 345–362 (LSVS…AFCF), 377–397 (LLVF…VKPS), 405–425 (MSTV…VGVL), and 436–456 (SLVL…GIFL). Ser-466 bears the Phosphoserine mark.

It belongs to the major facilitator superfamily. Spinster (TC 2.A.1.49) family.

The protein localises to the late endosome membrane. It is found in the lysosome membrane. In terms of biological role, probable sphingolipid transporter that plays a central role in endosomes and/or lysosomes storage. The chain is Probable sphingolipid transporter spinster homolog 2 from Arabidopsis thaliana (Mouse-ear cress).